The primary structure comprises 287 residues: Glutamate racemase (287 aa).

The segment covering 1 to 15 (MATKPQDANTTSREA) has biased composition (polar residues). A disordered region spans residues 1 to 25 (MATKPQDANTTSREAITSKADSPPR). Substrate is bound by residues 32–33 (DS) and 64–65 (YG). Residue Cys96 is the Proton donor/acceptor of the active site. Residue 97–98 (NT) coordinates substrate. Cys208 (proton donor/acceptor) is an active-site residue. 209–210 (TH) provides a ligand contact to substrate.

It belongs to the aspartate/glutamate racemases family.

It carries out the reaction L-glutamate = D-glutamate. It participates in cell wall biogenesis; peptidoglycan biosynthesis. In terms of biological role, provides the (R)-glutamate required for cell wall biosynthesis. The chain is Glutamate racemase from Yersinia pseudotuberculosis serotype I (strain IP32953).